The chain runs to 300 residues: NAD kinase (300 aa).

The Proton acceptor role is filled by D75. NAD(+) contacts are provided by residues 75 to 76 (DG), 149 to 150 (ND), R177, D179, 190 to 195 (TAYALS), A214, and Q248.

This sequence belongs to the NAD kinase family. Requires a divalent metal cation as cofactor.

It localises to the cytoplasm. The catalysed reaction is NAD(+) + ATP = ADP + NADP(+) + H(+). In terms of biological role, involved in the regulation of the intracellular balance of NAD and NADP, and is a key enzyme in the biosynthesis of NADP. Catalyzes specifically the phosphorylation on 2'-hydroxyl of the adenosine moiety of NAD to yield NADP. This is NAD kinase from Burkholderia cenocepacia (strain ATCC BAA-245 / DSM 16553 / LMG 16656 / NCTC 13227 / J2315 / CF5610) (Burkholderia cepacia (strain J2315)).